We begin with the raw amino-acid sequence, 382 residues long: MTEQRPLTIALVAGETSGDILGAGLIRALKERVPNARFVGVAGPRMQAEGCEAWYEMEELAVMGIVEVLGRLRRLLHIRADLTKRFGELKPDVFVGIDAPDFNITLEGNLKKQGIKTIHYVSPSVWAWRQKRVFKIGRATDLVLAFLPFEKAFYDKYNVPCRFIGHTMADAMPLDPDKNGARDVLGIPYDAHCLALLPGSRGAEVEMLSADFLKTAQLLRQTYPDLEIVVPLVNAKRREQFERIKAEVAPDLSVHLLDGMGREAMVASDAALLASGTAALECMLAKCPMVVGYRMKPFTFWLAKRLVKTDYVSLPNLLAGRELVKELLQEECEPQKLAAALLPLLANGKTSHAMHDTFRELHQQIRCNADEQAAQAVLELAQ.

Belongs to the LpxB family.

The catalysed reaction is 2-N,3-O-bis[(3R)-3-hydroxytetradecanoyl]-alpha-D-glucosaminyl 1-phosphate + UDP-2-N,3-O-bis[(3R)-3-hydroxytetradecanoyl]-alpha-D-glucosamine = lipid A disaccharide (E. coli) + UDP + H(+). It catalyses the reaction a lipid X + a UDP-2-N,3-O-bis[(3R)-3-hydroxyacyl]-alpha-D-glucosamine = a lipid A disaccharide + UDP + H(+). It functions in the pathway glycolipid biosynthesis; lipid IV(A) biosynthesis; lipid IV(A) from (3R)-3-hydroxytetradecanoyl-[acyl-carrier-protein] and UDP-N-acetyl-alpha-D-glucosamine: step 5/6. In terms of biological role, condensation of UDP-2,3-diacylglucosamine and 2,3-diacylglucosamine-1-phosphate to form lipid A disaccharide, a precursor of lipid A, a phosphorylated glycolipid that anchors the lipopolysaccharide to the outer membrane of the cell. The sequence is that of Lipid-A-disaccharide synthase from Escherichia coli (strain ATCC 8739 / DSM 1576 / NBRC 3972 / NCIMB 8545 / WDCM 00012 / Crooks).